Here is a 243-residue protein sequence, read N- to C-terminus: Nuclear ubiquitous casein and cyclin-dependent kinase substrate 1 (243 aa).

The segment at 1–243 is disordered; that stretch reads MSRPVRNRKV…SEDEAASGED (243 aa). Position 13 is a phosphotyrosine (Tyr13). 2 positions are modified to phosphoserine: Ser14 and Ser19. Tyr26 carries the phosphotyrosine modification. Over residues 35 to 51 the composition is skewed to basic residues; it reads KKIRSSPREAKNKRRSG. Residues Ser54, Ser58, Ser61, Ser73, Ser75, and Ser79 each carry the phosphoserine modification. The segment covering 64-77 has biased composition (basic and acidic residues); sequence KDVKTKKDDSHSAE. Residues 91–100 show a composition bias toward low complexity; that stretch reads QQRQAASKAA. Acidic residues predominate over residues 111 to 124; that stretch reads VGSEEEPEEDDEAP. Phosphoserine is present on residues Ser113, Ser130, Ser132, and Ser144. The segment covering 132-145 has biased composition (acidic residues); it reads SDEDFLMEDDDDSD. Residues 149 to 174 are compositionally biased toward basic residues; sequence SKKKNKKMVKKSKPERKEKKMPKPRL. Thr179 bears the Phosphothreonine mark. Phosphoserine is present on Ser181. Positions 197-206 are enriched in basic and acidic residues; it reads TSKEKTPSPK. Position 202 is a phosphothreonine (Thr202). A phosphoserine mark is found at Ser204, Ser214, Ser223, Ser229, Ser234, and Ser240. A compositionally biased stretch (acidic residues) spans 232–243; the sequence is EGSEDEAASGED.

Does not interact with RAD51. In terms of processing, phosphorylated in an ATM-dependent manner in response to DNA damage. Phosphorylated by CDK1 and casein kinase.

Its subcellular location is the nucleus. The protein resides in the chromosome. Functionally, chromatin-associated protein involved in DNA repair by promoting homologous recombination (HR). Binds double-stranded DNA (dsDNA) and secondary DNA structures, such as D-loop structures, but with less affinity than RAD51AP1. This is Nuclear ubiquitous casein and cyclin-dependent kinase substrate 1 from Rattus norvegicus (Rat).